The primary structure comprises 39 residues: Photosystem II reaction center protein X (39 aa).

A helical transmembrane segment spans residues 10-30 (WSLVLGAAIVLIPATIGLIFI).

This sequence belongs to the PsbX family. Type 1 subfamily. PSII is composed of 1 copy each of membrane proteins PsbA, PsbB, PsbC, PsbD, PsbE, PsbF, PsbH, PsbI, PsbJ, PsbK, PsbL, PsbM, PsbT, PsbX, PsbY, PsbZ, Psb30/Ycf12, peripheral proteins PsbO, CyanoQ (PsbQ), PsbU, PsbV and a large number of cofactors. It forms dimeric complexes.

It is found in the cellular thylakoid membrane. Functionally, involved in the binding and/or turnover of quinones at the Q(B) site of photosystem II (PSII). PSII is a light-driven water plastoquinone oxidoreductase, using light energy to abstract electrons from H(2)O, generating a proton gradient subsequently used for ATP formation. The protein is Photosystem II reaction center protein X of Microcystis aeruginosa (strain NIES-843 / IAM M-2473).